A 177-amino-acid polypeptide reads, in one-letter code: Antigen TpF1 (177 aa).

This sequence belongs to the Dps family. In terms of assembly, homodecamer; either linked or stabilized by disulfide bonds.

In terms of biological role, may play an important structural role in the outer membrane. This Treponema pallidum (strain Nichols) protein is Antigen TpF1 (tpf1).